The primary structure comprises 273 residues: Proteasome subunit beta type-7-A (273 aa).

Positions 1–37 (MSQSTVDVPPKGGFSFDLCKRNDMLTQKGLKAPSFLK) are cleaved as a propeptide — removed in mature form. The active-site Nucleophile is threonine 40.

It belongs to the peptidase T1B family. As to quaternary structure, component of the 20S core complex of the 26S proteasome. The 26S proteasome is composed of a core protease (CP), known as the 20S proteasome, capped at one or both ends by the 19S regulatory particle (RP/PA700). The 20S proteasome core is composed of 28 subunits that are arranged in four stacked rings, resulting in a barrel-shaped structure. The two end rings are each formed by seven alpha subunits, and the two central rings are each formed by seven beta subunits. The catalytic chamber with the active sites is on the inside of the barrel.

It localises to the cytoplasm. It is found in the nucleus. The enzyme catalyses Cleavage of peptide bonds with very broad specificity.. Functionally, the proteasome is a multicatalytic proteinase complex which is characterized by its ability to cleave peptides with Arg, Phe, Tyr, Leu, and Glu adjacent to the leaving group at neutral or slightly basic pH. The proteasome has an ATP-dependent proteolytic activity. This chain is Proteasome subunit beta type-7-A (PBB1), found in Arabidopsis thaliana (Mouse-ear cress).